Here is a 249-residue protein sequence, read N- to C-terminus: Acetylglutamate kinase (249 aa).

Substrate contacts are provided by residues 38–39, arginine 60, and asparagine 147; that span reads GG.

Belongs to the acetylglutamate kinase family. ArgB subfamily.

The protein localises to the cytoplasm. The catalysed reaction is N-acetyl-L-glutamate + ATP = N-acetyl-L-glutamyl 5-phosphate + ADP. It functions in the pathway amino-acid biosynthesis; L-arginine biosynthesis; N(2)-acetyl-L-ornithine from L-glutamate: step 2/4. Catalyzes the ATP-dependent phosphorylation of N-acetyl-L-glutamate. This is Acetylglutamate kinase from Deinococcus geothermalis (strain DSM 11300 / CIP 105573 / AG-3a).